Consider the following 382-residue polypeptide: D-galactonate dehydratase (382 aa).

A Mg(2+)-binding site is contributed by Asp183. His185 acts as the Proton donor in catalysis. Positions 209 and 235 each coordinate Mg(2+). His285 serves as the catalytic Proton acceptor.

Belongs to the mandelate racemase/muconate lactonizing enzyme family. GalD subfamily. Requires Mg(2+) as cofactor.

It carries out the reaction D-galactonate = 2-dehydro-3-deoxy-D-galactonate + H2O. It participates in carbohydrate acid metabolism; D-galactonate degradation; D-glyceraldehyde 3-phosphate and pyruvate from D-galactonate: step 1/3. Catalyzes the dehydration of D-galactonate to 2-keto-3-deoxy-D-galactonate. The sequence is that of D-galactonate dehydratase from Klebsiella pneumoniae (strain 342).